A 180-amino-acid polypeptide reads, in one-letter code: Probable RNA 2'-phosphotransferase (180 aa).

This sequence belongs to the KptA/TPT1 family.

In terms of biological role, removes the 2'-phosphate from RNA via an intermediate in which the phosphate is ADP-ribosylated by NAD followed by a presumed transesterification to release the RNA and generate ADP-ribose 1''-2''-cyclic phosphate (APPR&gt;P). May function as an ADP-ribosylase. The polypeptide is Probable RNA 2'-phosphotransferase (Pectobacterium atrosepticum (strain SCRI 1043 / ATCC BAA-672) (Erwinia carotovora subsp. atroseptica)).